A 1092-amino-acid chain; its full sequence is Probable cellulose synthase A catalytic subunit 6 [UDP-forming] (1092 aa).

The Cytoplasmic segment spans residues 1-280; it reads MEASAGLVAG…SSSRINPYRM (280 aa). 8 residues coordinate Zn(2+): Cys42, Cys45, Cys61, Cys64, Cys69, Cys72, Cys84, and Cys87. Residues 42–88 form an RING-type; degenerate zinc finger; it reads CQICGDDVGEGPDGEPFVACNECAFPVCRNCYDYERREGSQACPQCK. The interval 100–123 is disordered; sequence VAGDEEEDGVDDLEGEFGLDGRED. Residues 103-116 are compositionally biased toward acidic residues; sequence DEEEDGVDDLEGEF. A helical transmembrane segment spans residues 281–301; that stretch reads IIIIRLVVLGFFFHYRVMHPV. The Extracellular portion of the chain corresponds to 302 to 303; sequence ND. A helical membrane pass occupies residues 304–324; it reads AFALWLISVICEIWFAMSWIL. Over 325-868 the chain is Cytoplasmic; that stretch reads DQFPKWLPIE…FLERFSYINS (544 aa). UDP-alpha-D-glucose contacts are provided by Ser363, Lys369, Glu370, and Asp399. Asp399 is an active-site residue. A coiled-coil region spans residues 453-480; sequence VRERRAMKRDYEEFKVRINALVAKAQKV. Lys540 serves as a coordination point for UDP-alpha-D-glucose. The Mn(2+) site is built by Lys541 and Asp565. The active site involves Asp792. A helical membrane pass occupies residues 869–889; it reads IVYPWTSIPLLAYCTLPAICL. Over 890-901 the chain is Extracellular; sequence LTGKFITPELTN. A helical transmembrane segment spans residues 902–922; sequence VASLWFMSLFICIFVTGILEM. Topologically, residues 923 to 937 are cytoplasmic; that stretch reads RWSGVAIDDWWRNEQ. The helical transmembrane segment at 938–958 threads the bilayer; the sequence is FWVIGGVSSHLFAVFQGLLKV. Residues 959–987 are Extracellular-facing; it reads LAGVDTSFTVTSKAGDDEEFSELYTFKWT. A helical membrane pass occupies residues 988–1008; that stretch reads TLLIPPTTLLLLNFIGVVAGV. The Cytoplasmic segment spans residues 1009–1019; the sequence is SNAINNGYESW. The chain crosses the membrane as a helical span at residues 1020–1040; sequence GPLFGKLFFAFWVIVHLYPFL. At 1041–1049 the chain is on the extracellular side; that stretch reads KGLVGRQNR. The helical transmembrane segment at 1050–1070 threads the bilayer; sequence TPTIVIVWSILLASIFSLLWV. The Cytoplasmic segment spans residues 1071 to 1092; that stretch reads RIDPFLAKNNGPLLEECGLDCN.

This sequence belongs to the glycosyltransferase 2 family. Plant cellulose synthase subfamily. Mn(2+) is required as a cofactor. Zn(2+) serves as cofactor.

The protein resides in the cell membrane. The enzyme catalyses [(1-&gt;4)-beta-D-glucosyl](n) + UDP-alpha-D-glucose = [(1-&gt;4)-beta-D-glucosyl](n+1) + UDP + H(+). Its pathway is glycan metabolism; plant cellulose biosynthesis. In terms of biological role, probable catalytic subunit of cellulose synthase terminal complexes ('rosettes'), required for beta-1,4-glucan microfibril crystallization, a major mechanism of the cell wall formation. The polypeptide is Probable cellulose synthase A catalytic subunit 6 [UDP-forming] (CESA6) (Oryza sativa subsp. japonica (Rice)).